The chain runs to 277 residues: Undecaprenyl-diphosphatase (277 aa).

5 consecutive transmembrane segments (helical) span residues Phe-83–Ser-103, Leu-109–Ile-129, Ala-188–Val-208, Ala-218–Val-238, and Tyr-256–Ala-276.

This sequence belongs to the UppP family.

It is found in the cell inner membrane. The enzyme catalyses di-trans,octa-cis-undecaprenyl diphosphate + H2O = di-trans,octa-cis-undecaprenyl phosphate + phosphate + H(+). Catalyzes the dephosphorylation of undecaprenyl diphosphate (UPP). Confers resistance to bacitracin. This is Undecaprenyl-diphosphatase from Janthinobacterium sp. (strain Marseille) (Minibacterium massiliensis).